We begin with the raw amino-acid sequence, 581 residues long: Leucine aminopeptidase 3, chloroplastic (581 aa).

A chloroplast-targeting transit peptide spans 1-50; sequence MAVTLVTSCASSSRFHFRSFSSSPSSLSSCFVRFQLLSRLRVSFAITPLY. Residues Lys350 and Asp355 each coordinate Mn(2+). The active site involves Lys362. 3 residues coordinate Mn(2+): Asp375, Asp435, and Glu437. Arg439 is an active-site residue.

It belongs to the peptidase M17 family. As to quaternary structure, homohexamer (dimer of homotrimers). The cofactor is Mn(2+).

Its subcellular location is the plastid. It localises to the chloroplast. The catalysed reaction is Release of an N-terminal amino acid, Xaa-|-Yaa-, in which Xaa is preferably Leu, but may be other amino acids including Pro although not Arg or Lys, and Yaa may be Pro. Amino acid amides and methyl esters are also readily hydrolyzed, but rates on arylamides are exceedingly low.. The enzyme catalyses Release of N-terminal proline from a peptide.. Presumably involved in the processing and regular turnover of intracellular proteins. Catalyzes the removal of unsubstituted N-terminal amino acids from various peptides. Possesses Cys-Gly dipeptidase activity. The sequence is that of Leucine aminopeptidase 3, chloroplastic from Arabidopsis thaliana (Mouse-ear cress).